A 252-amino-acid polypeptide reads, in one-letter code: Phosphate import ATP-binding protein PstB (252 aa).

Residues 6–247 form the ABC transporter domain; the sequence is ISAENLNLFY…PKDQRTEDYI (242 aa). 38–45 is a binding site for ATP; it reads GPSGCGKS.

It belongs to the ABC transporter superfamily. Phosphate importer (TC 3.A.1.7) family. As to quaternary structure, the complex is composed of two ATP-binding proteins (PstB), two transmembrane proteins (PstC and PstA) and a solute-binding protein (PstS).

It localises to the cell membrane. The enzyme catalyses phosphate(out) + ATP + H2O = ADP + 2 phosphate(in) + H(+). Part of the ABC transporter complex PstSACB involved in phosphate import. Responsible for energy coupling to the transport system. The protein is Phosphate import ATP-binding protein PstB of Heliobacterium mobile (Heliobacillus mobilis).